A 207-amino-acid chain; its full sequence is N-(5'-phosphoribosyl)anthranilate isomerase (207 aa).

This sequence belongs to the TrpF family.

The catalysed reaction is N-(5-phospho-beta-D-ribosyl)anthranilate = 1-(2-carboxyphenylamino)-1-deoxy-D-ribulose 5-phosphate. It functions in the pathway amino-acid biosynthesis; L-tryptophan biosynthesis; L-tryptophan from chorismate: step 3/5. This chain is N-(5'-phosphoribosyl)anthranilate isomerase, found in Stutzerimonas stutzeri (strain A1501) (Pseudomonas stutzeri).